We begin with the raw amino-acid sequence, 329 residues long: tRNA(Ile)-lysidine synthase, chloroplastic (329 aa).

Residue 32-37 (SGGQDS) coordinates ATP.

This sequence belongs to the tRNA(Ile)-lysidine synthase family.

The protein resides in the plastid. Its subcellular location is the chloroplast. It carries out the reaction cytidine(34) in tRNA(Ile2) + L-lysine + ATP = lysidine(34) in tRNA(Ile2) + AMP + diphosphate + H(+). Its function is as follows. Ligates lysine onto the cytidine present at position 34 of the AUA codon-specific tRNA(Ile) that contains the anticodon CAU, in an ATP-dependent manner. Cytidine is converted to lysidine, thus changing the amino acid specificity of the tRNA from methionine to isoleucine. The chain is tRNA(Ile)-lysidine synthase, chloroplastic from Pyropia yezoensis (Susabi-nori).